The primary structure comprises 480 residues: 6-phosphogluconate dehydrogenase, decarboxylating (480 aa).

NADP(+)-binding positions include 11–16 (GLAVMG), 34–36 (NRS), 76–78 (IKA), and Asn104. Substrate-binding positions include Asn104 and 130–132 (SGG). Lys184 serves as the catalytic Proton acceptor. 187–188 (HN) is a binding site for substrate. The active-site Proton donor is Glu191. Substrate is bound by residues Tyr192, Lys261, Arg288, Arg448, and His454.

The protein belongs to the 6-phosphogluconate dehydrogenase family. Homodimer.

The catalysed reaction is 6-phospho-D-gluconate + NADP(+) = D-ribulose 5-phosphate + CO2 + NADPH. It participates in carbohydrate degradation; pentose phosphate pathway; D-ribulose 5-phosphate from D-glucose 6-phosphate (oxidative stage): step 3/3. In terms of biological role, catalyzes the oxidative decarboxylation of 6-phosphogluconate to ribulose 5-phosphate and CO(2), with concomitant reduction of NADP to NADPH. This Chlamydia trachomatis serovar D (strain ATCC VR-885 / DSM 19411 / UW-3/Cx) protein is 6-phosphogluconate dehydrogenase, decarboxylating (gnd).